The sequence spans 224 residues: NBPF family member NBPF6-like protein (224 aa).

Residues E159–L224 form the Olduvai domain. Residues Y198–R209 are compositionally biased toward basic and acidic residues. Residues Y198 to L224 are disordered.

It belongs to the NBPF family.

This chain is NBPF family member NBPF6-like protein, found in Bos taurus (Bovine).